A 51-amino-acid chain; its full sequence is Large ribosomal subunit protein eL39 (51 aa).

The segment covering 1–19 has biased composition (basic residues); the sequence is MSHNMKGQKKRLAKAHKQN. The segment at 1-23 is disordered; sequence MSHNMKGQKKRLAKAHKQNSRVP.

This sequence belongs to the eukaryotic ribosomal protein eL39 family.

The sequence is that of Large ribosomal subunit protein eL39 from Methanosarcina mazei (strain ATCC BAA-159 / DSM 3647 / Goe1 / Go1 / JCM 11833 / OCM 88) (Methanosarcina frisia).